Here is a 324-residue protein sequence, read N- to C-terminus: Polyketide biosynthesis acyltransferase homolog BaeD (324 aa).

Residue Ser-99 is part of the active site.

It is found in the cytoplasm. Its pathway is antibiotic biosynthesis; bacillaene biosynthesis. Functionally, probably involved in some intermediate steps for the synthesis of the antibiotic polyketide bacillaene which is involved in secondary metabolism. The sequence is that of Polyketide biosynthesis acyltransferase homolog BaeD (baeD) from Bacillus velezensis (strain DSM 23117 / BGSC 10A6 / LMG 26770 / FZB42) (Bacillus amyloliquefaciens subsp. plantarum).